We begin with the raw amino-acid sequence, 88 residues long: Cell division topological specificity factor (88 aa).

Belongs to the MinE family.

Functionally, prevents the cell division inhibition by proteins MinC and MinD at internal division sites while permitting inhibition at polar sites. This ensures cell division at the proper site by restricting the formation of a division septum at the midpoint of the long axis of the cell. In Psychromonas ingrahamii (strain DSM 17664 / CCUG 51855 / 37), this protein is Cell division topological specificity factor.